A 543-amino-acid polypeptide reads, in one-letter code: Phenylalanine--tRNA ligase beta subunit (543 aa).

The region spanning 269-344 (FDFRIMRPAR…KSKGIENIEE (76 aa)) is the B5 domain. The Mg(2+) site is built by Asp322, Asp328, Glu331, and Asp332.

The protein belongs to the phenylalanyl-tRNA synthetase beta subunit family. Type 2 subfamily. As to quaternary structure, tetramer of two alpha and two beta subunits. It depends on Mg(2+) as a cofactor.

The protein resides in the cytoplasm. It carries out the reaction tRNA(Phe) + L-phenylalanine + ATP = L-phenylalanyl-tRNA(Phe) + AMP + diphosphate + H(+). This Thermoplasma acidophilum (strain ATCC 25905 / DSM 1728 / JCM 9062 / NBRC 15155 / AMRC-C165) protein is Phenylalanine--tRNA ligase beta subunit.